Here is a 417-residue protein sequence, read N- to C-terminus: MAEYKNYTLNFGPVHPAAHGVLRLILELDGENVVRADPHVGLLHRGTEKLAEFKPYNQSIGYMDRLDYVSMMCNEHAYVMAIEKLLQLEVPERAKYIRVMFAEMTRILNHLLWVAACGIDLGAMTVFLYAFRVREDLFDCYEAVSGARMHAAYFRPGGVARDLPTQMPQYQKTRFTSKRKAKKLNEPRQGSMLDFLDHFVVDFEKSLDEIDTLLTDNRLWKQRTVDIGTVTAERAKELGFTGPMLRGSGVAWDLRKTQPYEVYHKLEFDIPIGANGDCYDRYLVRMAEMRESNKLIKQCVDWLRANPGPVLSDNNKVAPPKRNAMKNNMEELIHHFKLFSEGYCTTEGEVYVGTEHPKGEFGVYIKSDGANKPYRLKMRAPGFAHISAMDELLSGHMLADTPAIISTIDVVFGDVDR.

Belongs to the complex I 49 kDa subunit family. As to quaternary structure, NDH-1 is composed of 14 different subunits. Subunits NuoB, C, D, E, F, and G constitute the peripheral sector of the complex.

Its subcellular location is the cell inner membrane. The enzyme catalyses a quinone + NADH + 5 H(+)(in) = a quinol + NAD(+) + 4 H(+)(out). NDH-1 shuttles electrons from NADH, via FMN and iron-sulfur (Fe-S) centers, to quinones in the respiratory chain. The immediate electron acceptor for the enzyme in this species is believed to be ubiquinone. Couples the redox reaction to proton translocation (for every two electrons transferred, four hydrogen ions are translocated across the cytoplasmic membrane), and thus conserves the redox energy in a proton gradient. This Francisella tularensis subsp. tularensis (strain FSC 198) protein is NADH-quinone oxidoreductase subunit D.